Consider the following 1257-residue polypeptide: Neural cell adhesion molecule L1 (1257 aa).

Positions 1–19 (MVVALRYVWPLLLCSPCLL) are cleaved as a signal peptide. The Extracellular portion of the chain corresponds to 20-1120 (IQIPEEYEGH…RLPPAGFATE (1101 aa)). Ig-like C2-type domains lie at 35-125 (PVIT…TAMS), 139-226 (PKET…EPID), 240-328 (PRLL…YYVT), 333-420 (PYWL…AYIY), 425-507 (PAKI…NNVT), and 518-607 (TQIT…AQLL). Cystine bridges form between Cys-57/Cys-114 and Cys-158/Cys-209. Asn-100, Asn-203, Asn-247, and Asn-294 each carry an N-linked (GlcNAc...) asparagine glycan. Intrachain disulfides connect Cys-264/Cys-312 and Cys-354/Cys-404. N-linked (GlcNAc...) asparagine glycans are attached at residues Asn-433, Asn-479, Asn-490, and Asn-505. The cysteines at positions 448 and 497 are disulfide-linked. A disulfide bridge links Cys-539 with Cys-591. The Cell attachment site motif lies at 554–556 (RGD). 2 N-linked (GlcNAc...) asparagine glycosylation sites follow: Asn-588 and Asn-671. 5 consecutive Fibronectin type-III domains span residues 615 to 712 (VPRL…TPEA), 717 to 810 (NPVD…SGED), 814 to 916 (AIPE…TPEG), 920 to 1015 (HPEA…MALS), and 1016 to 1115 (GISD…LPPA). Positions 698 to 725 (GEPSPVSETVVTPEAAPEKNPVDVKGEG) are disordered. The span at 713 to 725 (APEKNPVDVKGEG) shows a compositional bias: basic and acidic residues. Asn-726, Asn-777, Asn-825, Asn-849, Asn-876, Asn-979, Asn-1022, Asn-1030, Asn-1071, and Asn-1105 each carry an N-linked (GlcNAc...) asparagine glycan. A helical transmembrane segment spans residues 1121–1143 (GWFIGFVSAIILLLLVLLILCFI). The Cytoplasmic segment spans residues 1144 to 1257 (KRSKGGKYSV…SPINPAVALE (114 aa)). Ser-1163, Thr-1172, Arg-1177, and Ser-1178 each carry phosphoserine. Residues 1176 to 1187 (YRSLESDNEEKA) are compositionally biased toward basic and acidic residues. Disordered stretches follow at residues 1176–1207 (YRSL…SDDS) and 1226–1257 (IGQY…VALE). Phosphoserine; by CaMK2 is present on Ser-1181. A phosphoserine mark is found at Ser-1194, Ser-1243, Ser-1244, and Ser-1248. The span at 1241-1250 (NDSSGATSPI) shows a compositional bias: polar residues.

Belongs to the immunoglobulin superfamily. L1/neurofascin/NgCAM family. Interacts with SHTN1; the interaction occurs in axonal growth cones. Interacts with isoform 2 of BSG.

It is found in the cell membrane. The protein resides in the cell projection. Its subcellular location is the growth cone. It localises to the axon. The protein localises to the dendrite. Neural cell adhesion molecule involved in the dynamics of cell adhesion and in the generation of transmembrane signals at tyrosine kinase receptors. During brain development, critical in multiple processes, including neuronal migration, axonal growth and fasciculation, and synaptogenesis. In the mature brain, plays a role in the dynamics of neuronal structure and function, including synaptic plasticity. The sequence is that of Neural cell adhesion molecule L1 (L1CAM) from Homo sapiens (Human).